The chain runs to 432 residues: Adenylosuccinate synthetase (432 aa).

Residues 12 to 18 and 40 to 42 each bind GTP; these read GDEGKGK and GHT. Residue D13 is the Proton acceptor of the active site. 2 residues coordinate Mg(2+): D13 and G40. Residues 13 to 16, 38 to 41, T132, R146, Q226, T241, and R305 each bind IMP; these read DEGK and NAGH. The active-site Proton donor is the H41. 301–307 provides a ligand contact to substrate; the sequence is VVTGRKR. Residues R307, 333–335, and 415–417 each bind GTP; these read KLD and STS.

Belongs to the adenylosuccinate synthetase family. As to quaternary structure, homodimer. It depends on Mg(2+) as a cofactor.

The protein resides in the cytoplasm. The catalysed reaction is IMP + L-aspartate + GTP = N(6)-(1,2-dicarboxyethyl)-AMP + GDP + phosphate + 2 H(+). It participates in purine metabolism; AMP biosynthesis via de novo pathway; AMP from IMP: step 1/2. Its function is as follows. Plays an important role in the de novo pathway of purine nucleotide biosynthesis. Catalyzes the first committed step in the biosynthesis of AMP from IMP. This chain is Adenylosuccinate synthetase, found in Rhizobium etli (strain CIAT 652).